A 700-amino-acid polypeptide reads, in one-letter code: Elongation factor G 2 (700 aa).

Positions 8–290 constitute a tr-type G domain; sequence ERYRNIGISA…AVIDFLPSPV (283 aa). GTP is bound by residues 17-24, 88-92, and 142-145; these read AHIDAGKT, DTPGH, and NKMD.

Belongs to the TRAFAC class translation factor GTPase superfamily. Classic translation factor GTPase family. EF-G/EF-2 subfamily.

It is found in the cytoplasm. In terms of biological role, catalyzes the GTP-dependent ribosomal translocation step during translation elongation. During this step, the ribosome changes from the pre-translocational (PRE) to the post-translocational (POST) state as the newly formed A-site-bound peptidyl-tRNA and P-site-bound deacylated tRNA move to the P and E sites, respectively. Catalyzes the coordinated movement of the two tRNA molecules, the mRNA and conformational changes in the ribosome. This chain is Elongation factor G 2, found in Burkholderia mallei (strain ATCC 23344).